Reading from the N-terminus, the 476-residue chain is Hyaluronidase-2 (476 aa).

The N-terminal stretch at 1 to 20 (MWTGLGPAVTLALVLVVAWA) is a signal peptide. Cystine bridges form between Cys47–Cys343 and Cys214–Cys230. N-linked (GlcNAc...) asparagine glycosylation is found at Asn77 and Asn106. The Proton donor role is filled by Glu138. Residues Asn340 and Asn360 are each glycosylated (N-linked (GlcNAc...) asparagine). Positions 364 to 442 (AAQYCSWAQC…YLGWGGEQCQ (79 aa)) constitute an EGF-like domain. Disulfide bonds link Cys368/Cys379, Cys373/Cys430, and Cys432/Cys441. Gly451 carries the GPI-anchor amidated glycine lipid modification. Residues 452–476 (ASGAWAGSHLTGLLAVAVLAFTWTS) constitute a propeptide, removed in mature form.

The protein belongs to the glycosyl hydrolase 56 family. Interacts with MST1R. As to quaternary structure, (Microbial infection) Interacts with Jaagsiekte sheep retrovirus (JSRV) envelope proteins.

The protein localises to the cell membrane. It catalyses the reaction Random hydrolysis of (1-&gt;4)-linkages between N-acetyl-beta-D-glucosamine and D-glucuronate residues in hyaluronate.. Catalyzes hyaluronan degradation into small fragments that are endocytosed and degraded in lysosomes by HYAL1 and exoglycosidases. Essential for the breakdown of extracellular matrix hyaluronan. This is Hyaluronidase-2 (HYAL2) from Ovis aries (Sheep).